A 214-amino-acid chain; its full sequence is Adenylate kinase (214 aa).

Position 10–15 (10–15 (GVGKGT)) interacts with ATP. The NMP stretch occupies residues 30-59 (STGDILRAAVKELTPMGAKAKGYMDSGALV). AMP-binding positions include threonine 31, arginine 36, 57–59 (ALV), 85–88 (GFPR), and glutamine 92. Residues 126 to 163 (GRRACANCGAGYHVDFAPSKVAGVCDACSGQLVQREDD) are LID. Arginine 127 provides a ligand contact to ATP. Zn(2+) contacts are provided by cysteine 130, cysteine 133, cysteine 150, and cysteine 153. The AMP site is built by arginine 160 and arginine 171. Glycine 199 serves as a coordination point for ATP.

The protein belongs to the adenylate kinase family. As to quaternary structure, monomer.

It localises to the cytoplasm. The enzyme catalyses AMP + ATP = 2 ADP. The protein operates within purine metabolism; AMP biosynthesis via salvage pathway; AMP from ADP: step 1/1. Its function is as follows. Catalyzes the reversible transfer of the terminal phosphate group between ATP and AMP. Plays an important role in cellular energy homeostasis and in adenine nucleotide metabolism. In Citrifermentans bemidjiense (strain ATCC BAA-1014 / DSM 16622 / JCM 12645 / Bem) (Geobacter bemidjiensis), this protein is Adenylate kinase.